The primary structure comprises 41 residues: Peroxidase 3 (41 aa).

The protein belongs to the peroxidase family. Classical plant (class III) peroxidase subfamily. It depends on heme b as a cofactor. Ca(2+) is required as a cofactor.

It is found in the secreted. It catalyses the reaction 2 a phenolic donor + H2O2 = 2 a phenolic radical donor + 2 H2O. Functionally, removal of H(2)O(2), oxidation of toxic reductants, biosynthesis and degradation of lignin, suberization, auxin catabolism, response to environmental stresses such as wounding, pathogen attack and oxidative stress. These functions might be dependent on each isozyme/isoform in each plant tissue. The polypeptide is Peroxidase 3 (Vitis vinifera (Grape)).